A 101-amino-acid chain; its full sequence is Large ribosomal subunit protein eL30 (101 aa).

Belongs to the eukaryotic ribosomal protein eL30 family.

This is Large ribosomal subunit protein eL30 (rpl30e) from Thermococcus celer.